The primary structure comprises 204 residues: Probable chorismate pyruvate-lyase (204 aa).

The substrate site is built by R78, L131, and E190.

The protein belongs to the UbiC family.

It is found in the cytoplasm. The enzyme catalyses chorismate = 4-hydroxybenzoate + pyruvate. Its pathway is cofactor biosynthesis; ubiquinone biosynthesis. Removes the pyruvyl group from chorismate, with concomitant aromatization of the ring, to provide 4-hydroxybenzoate (4HB) for the ubiquinone pathway. In Shewanella frigidimarina (strain NCIMB 400), this protein is Probable chorismate pyruvate-lyase.